Consider the following 452-residue polypeptide: Chaperone SurA (452 aa).

The N-terminal stretch at 1-28 is a signal peptide; sequence MKKTLRFAAVVSSLAAASALLAAAPAAA. 2 PpiC domains span residues 186-288 and 302-400; these read QQDL…RLVD and IVQT…QVLS.

Its subcellular location is the periplasm. It catalyses the reaction [protein]-peptidylproline (omega=180) = [protein]-peptidylproline (omega=0). Its function is as follows. Chaperone involved in the correct folding and assembly of outer membrane proteins. Recognizes specific patterns of aromatic residues and the orientation of their side chains, which are found more frequently in integral outer membrane proteins. May act in both early periplasmic and late outer membrane-associated steps of protein maturation. The chain is Chaperone SurA from Burkholderia lata (strain ATCC 17760 / DSM 23089 / LMG 22485 / NCIMB 9086 / R18194 / 383).